The following is a 461-amino-acid chain: Cysteine--tRNA ligase (461 aa).

C28 contributes to the Zn(2+) binding site. Positions 30 to 40 (VTIYDLCHIGH) match the 'HIGH' region motif. Residues C209, H234, and E238 each contribute to the Zn(2+) site. Residues 266–270 (KMSKS) carry the 'KMSKS' region motif. K269 is an ATP binding site.

It belongs to the class-I aminoacyl-tRNA synthetase family. As to quaternary structure, monomer. Zn(2+) serves as cofactor.

It localises to the cytoplasm. The catalysed reaction is tRNA(Cys) + L-cysteine + ATP = L-cysteinyl-tRNA(Cys) + AMP + diphosphate. The polypeptide is Cysteine--tRNA ligase (Edwardsiella ictaluri (strain 93-146)).